A 61-amino-acid chain; its full sequence is Large ribosomal subunit protein bL32 (61 aa).

The span at 1–16 (MAVPKKKTSKSRKNMR) shows a compositional bias: basic residues. The disordered stretch occupies residues 1–20 (MAVPKKKTSKSRKNMRRAHD).

The protein belongs to the bacterial ribosomal protein bL32 family.

The sequence is that of Large ribosomal subunit protein bL32 from Pelobacter propionicus (strain DSM 2379 / NBRC 103807 / OttBd1).